A 140-amino-acid chain; its full sequence is MVDNAGDYEARGDRLLGFPLPSPRVRIRPWWFPAQELRNPLVFFLEAWLADLIFGPDRALVPEMEWMSQALLMVDAVDAGNLVEVTVFARPAVQRQVKSVLLSQASVHREQRARAEKMEQLEEFLKAQAPGPQVPQHPVA.

The KH; atypical domain maps to 40–101 (PLVFFLEAWL…AVQRQVKSVL (62 aa)).

Belongs to the KHDC1 family. As to quaternary structure, component of the subcortical maternal complex (SCMC), at least composed of NLRP5, KHDC3, OOEP, and TLE6. Within the complex, interacts with NLRP5, KHDC3 and TLE6. As part of the SCMC interacts with the SCMC-associated protein NLRP4F. The SCMC may facilitate translocation of its components between the nuclear and cytoplasmic compartments. Forms a scaffold complex with KHDC3/FILIA, and interacts with BLM and TRIM25 at DNA replication forks.

It localises to the cytoplasm. The protein localises to the nucleus. Component of the subcortical maternal complex (SCMC), a multiprotein complex that plays a key role in early embryonic development. The SCMC complex is a structural constituent of cytoplasmic lattices, which consist in fibrous structures found in the cytoplasm of oocytes and preimplantation embryos. They are required to store maternal proteins critical for embryonic development, such as proteins that control epigenetic reprogramming of the preimplantation embryo, and prevent their degradation or activation. As part of the OOEP-KHDC3 scaffold, recruits BLM and TRIM25 to DNA replication forks, thereby promoting the ubiquitination of BLM by TRIM25, enhancing BLM retainment at replication forks and therefore promoting stalled replication fork restart. Positively regulates the homologous recombination-mediated DNA double-strand break (DSB) repair pathway by regulating ATM activation and RAD51 recruitment to DSBs in oocytes. Thereby contributes to oocyte survival and the resumption and completion of meiosis. This is Oocyte-expressed protein homolog (OOEP) from Bos taurus (Bovine).